Reading from the N-terminus, the 205-residue chain is Ribosomal RNA small subunit methyltransferase G (205 aa).

S-adenosyl-L-methionine is bound by residues glycine 66, phenylalanine 71, 119-120, and arginine 135; that span reads IE.

This sequence belongs to the methyltransferase superfamily. RNA methyltransferase RsmG family.

The protein localises to the cytoplasm. It catalyses the reaction guanosine(527) in 16S rRNA + S-adenosyl-L-methionine = N(7)-methylguanosine(527) in 16S rRNA + S-adenosyl-L-homocysteine. Functionally, specifically methylates the N7 position of guanine in position 527 of 16S rRNA. This Rhizobium etli (strain ATCC 51251 / DSM 11541 / JCM 21823 / NBRC 15573 / CFN 42) protein is Ribosomal RNA small subunit methyltransferase G.